We begin with the raw amino-acid sequence, 1115 residues long: Iron-regulated protein FrpA (1115 aa).

Hemolysin-type calcium-binding repeat units follow at residues 755-772 (FGHNKNVSLYGNDGNDTL), 773-790 (IGGAGNDYLEGGSGSDTY), 901-918 (NGGLGDDYLYGADGNDLL), 919-936 (NGDAGNDSIYSGNGNDTL), 937-954 (DGGEGNDALYGYNGNDAL), 955-972 (NGGEGNDHLNGEDGNDTL), and 973-990 (IGGAGNDYLEGGSGSDTY).

This sequence belongs to the RTX prokaryotic toxin (TC 1.C.11) family.

It is found in the cell outer membrane. The protein localises to the secreted. May participate in the pathogenesis of meningococcal disease. This is Iron-regulated protein FrpA (frpA) from Neisseria meningitidis serogroup C.